Here is a 297-residue protein sequence, read N- to C-terminus: Protoheme IX farnesyltransferase (297 aa).

9 helical membrane passes run 26–46 (VTQL…PGMV), 48–68 (YPVL…AFAV), 96–116 (FHII…LWNF), 120–140 (LTMW…TWLL), 147–167 (NIVI…AAVT), 174–194 (AWLL…ALAL), 218–238 (LLNI…PYIY), 243–263 (IIYL…VIAL), and 276–296 (FRFS…DHYF).

This sequence belongs to the UbiA prenyltransferase family. Protoheme IX farnesyltransferase subfamily.

The protein resides in the cell membrane. The catalysed reaction is heme b + (2E,6E)-farnesyl diphosphate + H2O = Fe(II)-heme o + diphosphate. It participates in porphyrin-containing compound metabolism; heme O biosynthesis; heme O from protoheme: step 1/1. Its function is as follows. Converts heme B (protoheme IX) to heme O by substitution of the vinyl group on carbon 2 of heme B porphyrin ring with a hydroxyethyl farnesyl side group. This chain is Protoheme IX farnesyltransferase, found in Polynucleobacter asymbioticus (strain DSM 18221 / CIP 109841 / QLW-P1DMWA-1) (Polynucleobacter necessarius subsp. asymbioticus).